A 482-amino-acid chain; its full sequence is tRNA sulfurtransferase (482 aa).

The THUMP domain occupies 61-165 (PAIRDALTRI…NDRLLLVKGR (105 aa)). ATP is bound by residues 183-184 (LI), Lys-265, Gly-287, and Gln-296. Cys-344 and Cys-456 are joined by a disulfide. The Rhodanese domain maps to 404-482 (FGANDAILDI…GFSNVKVYRP (79 aa)). Cys-456 functions as the Cysteine persulfide intermediate in the catalytic mechanism.

Belongs to the ThiI family.

The protein resides in the cytoplasm. It catalyses the reaction [ThiI sulfur-carrier protein]-S-sulfanyl-L-cysteine + a uridine in tRNA + 2 reduced [2Fe-2S]-[ferredoxin] + ATP + H(+) = [ThiI sulfur-carrier protein]-L-cysteine + a 4-thiouridine in tRNA + 2 oxidized [2Fe-2S]-[ferredoxin] + AMP + diphosphate. It carries out the reaction [ThiS sulfur-carrier protein]-C-terminal Gly-Gly-AMP + S-sulfanyl-L-cysteinyl-[cysteine desulfurase] + AH2 = [ThiS sulfur-carrier protein]-C-terminal-Gly-aminoethanethioate + L-cysteinyl-[cysteine desulfurase] + A + AMP + 2 H(+). Its pathway is cofactor biosynthesis; thiamine diphosphate biosynthesis. Catalyzes the ATP-dependent transfer of a sulfur to tRNA to produce 4-thiouridine in position 8 of tRNAs, which functions as a near-UV photosensor. Also catalyzes the transfer of sulfur to the sulfur carrier protein ThiS, forming ThiS-thiocarboxylate. This is a step in the synthesis of thiazole, in the thiamine biosynthesis pathway. The sulfur is donated as persulfide by IscS. This is tRNA sulfurtransferase from Klebsiella pneumoniae (strain 342).